The primary structure comprises 401 residues: Ascaroside receptor GPR3 (401 aa).

Topologically, residues 1 to 16 (MQPFGDAWSQRHLAGV) are extracellular. The chain crosses the membrane as a helical span at residues 17–37 (VLAGSVLSIVGSLYMILGFFF). At 38-47 (LRECRSFRHK) the chain is on the cytoplasmic side. The helical transmembrane segment at 48-68 (LILGLAVSDLLLALNFFIPSL) threads the bilayer. Over 69–93 (SMVTGREISSPWNEGFCSANGFLMQ) the chain is Extracellular. An intrachain disulfide couples cysteine 85 to cysteine 159. Residues 94–114 (LFFAQIDVWQISIALITLLML) form a helical membrane-spanning segment. Residues 115 to 128 (SGPSMVLKWIRENV) lie on the Cytoplasmic side of the membrane. The chain crosses the membrane as a helical span at residues 129–149 (WAVWLFPWLVSLIAAFFAFGF). At 150-175 (WDYANVGGFCWLGSRNIRLYFNYIPR) the chain is on the extracellular side. A helical membrane pass occupies residues 176-196 (WIIILVCLVIYIAVYRLILHA). Residues 197–294 (RRRANIQKTY…QKQVRKIAIQ (98 aa)) lie on the Cytoplasmic side of the membrane. Positions 206-259 (YRGRASDRAPPQPVTTTAPATNPESEKVNPDEISSGNGSSSLDTSRSGSSTGFT) are disordered. Positions 239–257 (SSGNGSSSLDTSRSGSSTG) are enriched in low complexity. Residues 295 to 315 (MISYPLAYAVLWAIPTIVMII) form a helical membrane-spanning segment. Over 316-321 (QVARGG) the chain is Extracellular. A helical membrane pass occupies residues 322–342 (EGVSIHVEGLAKMLLVFNGFV). Topologically, residues 343-401 (DAHVYGFNERTAMGWRQRIRPAAQEDDEEAAGTSGGVHEVVSRPEPTLKNPNVWQQNMV) are cytoplasmic. The segment at 362–401 (RPAAQEDDEEAAGTSGGVHEVVSRPEPTLKNPNVWQQNMV) is disordered. The segment covering 391–401 (KNPNVWQQNMV) has biased composition (polar residues).

Belongs to the G-protein coupled receptor 1 family. In terms of assembly, interacts with ascaroside receptor GPR2; may form a functional heterodimer. Interacts with guanine nucleotide-binding protein alpha GPA2; to activate adenylate cyclase and positively regulate nematode trap formation.

It is found in the cell membrane. In terms of biological role, g protein-coupled receptor that senses nematode ascaroside pheromones and signals via adenylate cyclase to positively regulate trap formation for nematode capture. This chain is Ascaroside receptor GPR3, found in Arthrobotrys oligospora (strain ATCC 24927 / CBS 115.81 / DSM 1491) (Nematode-trapping fungus).